A 223-amino-acid polypeptide reads, in one-letter code: GRF1-interacting factor 3 (223 aa).

Positions 179 to 223 are disordered; that stretch reads ANNAGPNDASGGGKPDGTNMSQSGADGQGGSAARHGGGDAKTEGK. Positions 214–223 are enriched in basic and acidic residues; it reads GGGDAKTEGK.

The protein belongs to the SS18 family. As to quaternary structure, interacts with GRF1. In terms of tissue distribution, predominantly expressed in shoot tips containing the shoot apical meristem (SAM) and flower buds. Also expressed in mature flowers.

In terms of biological role, transcription coactivator that plays a role in the regulation of cell expansion in leaf and cotyledons tissues. Component of a network formed by miR396, the GRFs and their interacting factors (GIFs) acting in the regulation of meristem function, at least partially through the control of cell proliferation. GIFs are involved in the positive regulation of cell proliferation of lateral organs in a functionally redundant manner. The protein is GRF1-interacting factor 3 (GIF3) of Arabidopsis thaliana (Mouse-ear cress).